Consider the following 58-residue polypeptide: Large ribosomal subunit protein bL32c (58 aa).

It belongs to the bacterial ribosomal protein bL32 family.

It localises to the plastid. Its subcellular location is the chloroplast. This Chaetosphaeridium globosum (Charophycean green alga) protein is Large ribosomal subunit protein bL32c.